Reading from the N-terminus, the 329-residue chain is UDP-N-acetylenolpyruvoylglucosamine reductase (329 aa).

Residues 28–192 (RVGGPADLLC…ARVEVRLRPG (165 aa)) enclose the FAD-binding PCMH-type domain. The active site involves Arg172. Positions 204-225 (DRERRRATQPLDRPTFGSTFTN) are disordered. The Proton donor role is filled by Ser221. Glu291 is an active-site residue. Residues 303–329 (LAGLDGHAADGGGPGAASGGARPREAT) are disordered. Residues 311–320 (ADGGGPGAAS) show a composition bias toward gly residues.

Belongs to the MurB family. FAD serves as cofactor.

The protein resides in the cytoplasm. It catalyses the reaction UDP-N-acetyl-alpha-D-muramate + NADP(+) = UDP-N-acetyl-3-O-(1-carboxyvinyl)-alpha-D-glucosamine + NADPH + H(+). Its pathway is cell wall biogenesis; peptidoglycan biosynthesis. Functionally, cell wall formation. In Anaeromyxobacter dehalogenans (strain 2CP-C), this protein is UDP-N-acetylenolpyruvoylglucosamine reductase.